The sequence spans 446 residues: Bifunctional protein GlmU (446 aa).

The tract at residues 1–226 (MLAIAILAAG…PFEIKGINDR (226 aa)) is pyrophosphorylase. Residues 7–10 (LAAG), lysine 21, glutamine 73, and 78–79 (GT) each bind UDP-N-acetyl-alpha-D-glucosamine. Mg(2+) is bound at residue aspartate 103. UDP-N-acetyl-alpha-D-glucosamine contacts are provided by glycine 140, glutamate 155, asparagine 170, and asparagine 224. Mg(2+) is bound at residue asparagine 224. The segment at 227-247 (VQLSECEHYIQEELKSLWMSK) is linker. Positions 248-446 (GVSFVDPISC…SKAIIRTKAD (199 aa)) are N-acetyltransferase. Residues arginine 329 and lysine 347 each contribute to the UDP-N-acetyl-alpha-D-glucosamine site. Catalysis depends on histidine 359, which acts as the Proton acceptor. Residues tyrosine 362 and asparagine 373 each contribute to the UDP-N-acetyl-alpha-D-glucosamine site. Positions 376, 419, and 436 each coordinate acetyl-CoA.

In the N-terminal section; belongs to the N-acetylglucosamine-1-phosphate uridyltransferase family. It in the C-terminal section; belongs to the transferase hexapeptide repeat family. As to quaternary structure, homotrimer. Requires Mg(2+) as cofactor.

It is found in the cytoplasm. It carries out the reaction alpha-D-glucosamine 1-phosphate + acetyl-CoA = N-acetyl-alpha-D-glucosamine 1-phosphate + CoA + H(+). The catalysed reaction is N-acetyl-alpha-D-glucosamine 1-phosphate + UTP + H(+) = UDP-N-acetyl-alpha-D-glucosamine + diphosphate. The protein operates within nucleotide-sugar biosynthesis; UDP-N-acetyl-alpha-D-glucosamine biosynthesis; N-acetyl-alpha-D-glucosamine 1-phosphate from alpha-D-glucosamine 6-phosphate (route II): step 2/2. It participates in nucleotide-sugar biosynthesis; UDP-N-acetyl-alpha-D-glucosamine biosynthesis; UDP-N-acetyl-alpha-D-glucosamine from N-acetyl-alpha-D-glucosamine 1-phosphate: step 1/1. Its pathway is bacterial outer membrane biogenesis; LPS lipid A biosynthesis. Catalyzes the last two sequential reactions in the de novo biosynthetic pathway for UDP-N-acetylglucosamine (UDP-GlcNAc). The C-terminal domain catalyzes the transfer of acetyl group from acetyl coenzyme A to glucosamine-1-phosphate (GlcN-1-P) to produce N-acetylglucosamine-1-phosphate (GlcNAc-1-P), which is converted into UDP-GlcNAc by the transfer of uridine 5-monophosphate (from uridine 5-triphosphate), a reaction catalyzed by the N-terminal domain. This is Bifunctional protein GlmU from Prochlorococcus marinus (strain NATL2A).